A 561-amino-acid chain; its full sequence is DNA ligase B (561 aa).

The active-site N6-AMP-lysine intermediate is Lys125.

This sequence belongs to the NAD-dependent DNA ligase family. LigB subfamily.

The enzyme catalyses NAD(+) + (deoxyribonucleotide)n-3'-hydroxyl + 5'-phospho-(deoxyribonucleotide)m = (deoxyribonucleotide)n+m + AMP + beta-nicotinamide D-nucleotide.. Catalyzes the formation of phosphodiester linkages between 5'-phosphoryl and 3'-hydroxyl groups in double-stranded DNA using NAD as a coenzyme and as the energy source for the reaction. The chain is DNA ligase B from Salmonella agona (strain SL483).